Consider the following 335-residue polypeptide: ATP-dependent 6-phosphofructokinase (335 aa).

ATP is bound at residue Gly-11. ADP is bound at residue Arg-21–Arg-25. ATP is bound by residues Arg-72–Tyr-73 and Gly-102–Ser-105. Asp-103 is a Mg(2+) binding site. Thr-125–Asp-127 serves as a coordination point for substrate. Residue Asp-127 is the Proton acceptor of the active site. Arg-154 is an ADP binding site. Substrate is bound by residues Arg-162 and Met-169–Arg-171. ADP-binding positions include Gly-185–Asp-187 and Lys-213–His-215. Residues Glu-222, Arg-244, and His-250–Arg-253 each bind substrate.

Belongs to the phosphofructokinase type A (PFKA) family. ATP-dependent PFK group I subfamily. Prokaryotic clade 'B1' sub-subfamily. In terms of assembly, homotetramer. Mg(2+) is required as a cofactor.

It localises to the cytoplasm. The enzyme catalyses beta-D-fructose 6-phosphate + ATP = beta-D-fructose 1,6-bisphosphate + ADP + H(+). It functions in the pathway carbohydrate degradation; glycolysis; D-glyceraldehyde 3-phosphate and glycerone phosphate from D-glucose: step 3/4. Its activity is regulated as follows. Allosterically activated by ADP and other diphosphonucleosides, and allosterically inhibited by phosphoenolpyruvate. Its function is as follows. Catalyzes the phosphorylation of D-fructose 6-phosphate to fructose 1,6-bisphosphate by ATP, the first committing step of glycolysis. This Streptococcus pneumoniae (strain ATCC BAA-255 / R6) protein is ATP-dependent 6-phosphofructokinase.